The chain runs to 173 residues: Gonadotropin inhibitory hormone peptides (173 aa).

A signal peptide spans 1 to 26 (MEIISTQKFILLTLATVAFLTPHGAC). The propeptide occupies 27–82 (LDELMKSSLESREDDDDKYYETKDSILEEKQRSLNFEEMKDWGSKNFMKVNTPTVN). At phenylalanine 95 the chain carries Phenylalanine amide. Positions 98–103 (SNPEER) are excised as a propeptide. Position 115 is a phenylalanine amide (phenylalanine 115). Positions 118–140 (AFGESLSRRAPNLSNRSGRSPLA) are excised as a propeptide. Phenylalanine 154 carries the phenylalanine amide modification. Residues 157 to 173 (SVPISLSQGVQESEPGM) constitute a propeptide that is removed on maturation.

This sequence belongs to the FARP (FMRFamide related peptide) family. As to expression, specifically expressed in the diencephalon.

It localises to the secreted. In terms of biological role, hypothalamic factor, responsible for the negative regulation of gonadotropin secretion. The protein is Gonadotropin inhibitory hormone peptides (GNIH) of Coturnix japonica (Japanese quail).